The sequence spans 831 residues: Valine--tRNA ligase (831 aa).

The 'HIGH' region signature appears at 77 to 87; it reads PFTSGELHMGH. The 'KMSKS' region signature appears at 564–568; the sequence is RMSKS. Lys-567 is an ATP binding site.

The protein belongs to the class-I aminoacyl-tRNA synthetase family. ValS type 2 subfamily.

Its subcellular location is the cytoplasm. It catalyses the reaction tRNA(Val) + L-valine + ATP = L-valyl-tRNA(Val) + AMP + diphosphate. In terms of biological role, catalyzes the attachment of valine to tRNA(Val). As ValRS can inadvertently accommodate and process structurally similar amino acids such as threonine, to avoid such errors, it has a 'posttransfer' editing activity that hydrolyzes mischarged Thr-tRNA(Val) in a tRNA-dependent manner. This Sulfolobus acidocaldarius (strain ATCC 33909 / DSM 639 / JCM 8929 / NBRC 15157 / NCIMB 11770) protein is Valine--tRNA ligase.